A 289-amino-acid polypeptide reads, in one-letter code: ATP synthase gamma chain (289 aa).

It belongs to the ATPase gamma chain family. As to quaternary structure, F-type ATPases have 2 components, CF(1) - the catalytic core - and CF(0) - the membrane proton channel. CF(1) has five subunits: alpha(3), beta(3), gamma(1), delta(1), epsilon(1). CF(0) has three main subunits: a, b and c.

It is found in the cell inner membrane. Produces ATP from ADP in the presence of a proton gradient across the membrane. The gamma chain is believed to be important in regulating ATPase activity and the flow of protons through the CF(0) complex. The chain is ATP synthase gamma chain from Erwinia tasmaniensis (strain DSM 17950 / CFBP 7177 / CIP 109463 / NCPPB 4357 / Et1/99).